A 329-amino-acid chain; its full sequence is MSNLSCAAPDVLERLDSFNMKLSQFVDLLAIILAFFASYFAIKIVINQSFFELSTKILLLQNLFYTNLYQISYGIEAIGMLYRGFFMLSEPCSILQSETSCAPYFKVLMIGTSGMIFGQTGLLIERAFATFATTYKTKKSVYIGVCISLIVLVCSTSSGFIILWDDPLEGWTIGCFAVSKSVVPRFNLFSILSTVLTLFNLIVSIFIQRYNKRFEFETRFKVGARFQKQELIESTGAICFLALSQFLWMFMYSFGILILRIIREDILPSTFYFWIAWCYTMPFIALMFPVLLIYRIRKTRARRTEKMKGITTEKQTQDDHIKQINAMWT.

The next 7 membrane-spanning stretches (helical) occupy residues valine 26–isoleucine 46, leucine 68–leucine 88, tyrosine 104–isoleucine 124, isoleucine 143–leucine 163, asparagine 187–isoleucine 207, isoleucine 238–isoleucine 258, and phenylalanine 273–isoleucine 293.

It belongs to the nematode receptor-like protein sra family.

The protein resides in the membrane. In Caenorhabditis elegans, this protein is Serpentine receptor class alpha-6 (sra-6).